The sequence spans 22 residues: Melittin-like peptide (22 aa).

Position 22 is a glutamine amide (Gln22).

In terms of tissue distribution, expressed by the skin dorsal glands.

It is found in the secreted. This chain is Melittin-like peptide, found in Rana temporaria (European common frog).